The chain runs to 755 residues: Oligopeptide transporter 1 (755 aa).

13 helical membrane passes run 58-78, 82-102, 134-154, 165-185, 226-246, 298-318, 370-390, 434-454, 462-482, 546-566, 614-634, 664-684, and 697-717; these read TWTL…FFGF, QLWV…KLMA, ITIF…ITIV, AAAM…AGIF, FFII…YLFP, FFAI…VLPI, YLSV…CATI, WWFI…CEGF, WWGL…IGVI, FIVQ…TTWW, GIYP…VPFW, AKAV…YYIF, and ILSA…FFAF.

This sequence belongs to the oligopeptide OPT transporter (TC 2.A.67.1) family. In terms of tissue distribution, highly expressed in flowers, and moderately expressed in leaves and stems.

It is found in the membrane. Functionally, involved in the translocation of tetra- and pentapeptides across the cellular membrane in an energy-dependent manner. The chain is Oligopeptide transporter 1 (OPT1) from Arabidopsis thaliana (Mouse-ear cress).